Here is a 137-residue protein sequence, read N- to C-terminus: Protein Turandot X (137 aa).

The signal sequence occupies residues 1–24; sequence MRVPVFQLSCLLGLIVCLLCSVKA.

Belongs to the Turandot family.

It is found in the secreted. In terms of biological role, a humoral factor that may play a role in stress tolerance. In Drosophila pseudoobscura pseudoobscura (Fruit fly), this protein is Protein Turandot X.